Reading from the N-terminus, the 183-residue chain is Adenine phosphoribosyltransferase (183 aa).

Belongs to the purine/pyrimidine phosphoribosyltransferase family. In terms of assembly, homodimer.

Its subcellular location is the cytoplasm. It catalyses the reaction AMP + diphosphate = 5-phospho-alpha-D-ribose 1-diphosphate + adenine. Its pathway is purine metabolism; AMP biosynthesis via salvage pathway; AMP from adenine: step 1/1. In terms of biological role, catalyzes a salvage reaction resulting in the formation of AMP, that is energically less costly than de novo synthesis. In Cronobacter sakazakii (strain ATCC BAA-894) (Enterobacter sakazakii), this protein is Adenine phosphoribosyltransferase.